The primary structure comprises 141 residues: Nucleoside diphosphate kinase (141 aa).

Residues K11, F59, R87, T93, R104, and N114 each coordinate ATP. The active-site Pros-phosphohistidine intermediate is the H117.

This sequence belongs to the NDK family. Homotetramer. Mg(2+) serves as cofactor.

It localises to the cytoplasm. The catalysed reaction is a 2'-deoxyribonucleoside 5'-diphosphate + ATP = a 2'-deoxyribonucleoside 5'-triphosphate + ADP. The enzyme catalyses a ribonucleoside 5'-diphosphate + ATP = a ribonucleoside 5'-triphosphate + ADP. Its function is as follows. Major role in the synthesis of nucleoside triphosphates other than ATP. The ATP gamma phosphate is transferred to the NDP beta phosphate via a ping-pong mechanism, using a phosphorylated active-site intermediate. The polypeptide is Nucleoside diphosphate kinase (Albidiferax ferrireducens (strain ATCC BAA-621 / DSM 15236 / T118) (Rhodoferax ferrireducens)).